Consider the following 432-residue polypeptide: Serine--tRNA ligase (432 aa).

Residue 238–240 (TAE) participates in L-serine binding. 269-271 (RSE) contacts ATP. An L-serine-binding site is contributed by Glu-292. An ATP-binding site is contributed by 356–359 (EVSS). An L-serine-binding site is contributed by Ser-392.

This sequence belongs to the class-II aminoacyl-tRNA synthetase family. Type-1 seryl-tRNA synthetase subfamily. In terms of assembly, homodimer. The tRNA molecule binds across the dimer.

It localises to the cytoplasm. It catalyses the reaction tRNA(Ser) + L-serine + ATP = L-seryl-tRNA(Ser) + AMP + diphosphate + H(+). The enzyme catalyses tRNA(Sec) + L-serine + ATP = L-seryl-tRNA(Sec) + AMP + diphosphate + H(+). The protein operates within aminoacyl-tRNA biosynthesis; selenocysteinyl-tRNA(Sec) biosynthesis; L-seryl-tRNA(Sec) from L-serine and tRNA(Sec): step 1/1. Functionally, catalyzes the attachment of serine to tRNA(Ser). Is also able to aminoacylate tRNA(Sec) with serine, to form the misacylated tRNA L-seryl-tRNA(Sec), which will be further converted into selenocysteinyl-tRNA(Sec). In Buchnera aphidicola subsp. Baizongia pistaciae (strain Bp), this protein is Serine--tRNA ligase.